The primary structure comprises 935 residues: Potassium channel AKT1 (935 aa).

The Cytoplasmic portion of the chain corresponds to 1 to 106 (MARWGAARMA…YDRRYRIWET (106 aa)). Residues 107 to 127 (FLIVLVVYSAWVSPFEFGFIP) form a helical membrane-spanning segment. Residues 128 to 136 (KPTGALATA) lie on the Extracellular side of the membrane. A helical membrane pass occupies residues 137–157 (DNVVNAFFAVDIILTFFVAYL). Residues 158–178 (DKMSYMLEDDPKKIAWRYSTT) are Cytoplasmic-facing. A helical transmembrane segment spans residues 179–199 (WLVLDVASTIPSEFARRILPS). The Extracellular portion of the chain corresponds to 200-205 (KLRSYG). The helical; Voltage-sensor transmembrane segment at 206 to 226 (FFNMLRLWRLRRVSSLFSRLE) threads the bilayer. Residues 227-240 (KDRHFNYFWVRCAK) are Cytoplasmic-facing. Residues 241–261 (LICVTLFAVHCAACFYYLLAD) traverse the membrane as a helical segment. Topologically, residues 262 to 288 (RYPVPTSTWIGNYMADFHERSLWIRYV) are extracellular. The pore-forming intramembrane region spans 289–308 (TSVYWSITTLTTVGYGDLHA). The Extracellular segment spans residues 309–312 (ENTR). Residues 313 to 333 (EMIFNIFYMLFNLGLTAYLIG) traverse the membrane as a helical segment. At 334–935 (NMTNLVVHGT…WDAEKMKGKS (602 aa)) the chain is on the cytoplasmic side. Residue 419–538 (LFQGVSNDLI…TIIMNNLIQF (120 aa)) participates in a nucleoside 3',5'-cyclic phosphate binding. ANK repeat units follow at residues 565-594 (DLPITLCFAVTRGDDFLLHQLLKRGMDPNE), 598-627 (DGHTALHIAASKGNEQCVRLLLEYGADPNA), 631-660 (EGKVPLWEALCEKHAAVVQLLVEGGADLSS), 662-691 (DTGLYACIAVEESDTELLNDIIHYGGDVNR), 695-724 (DGTTALHRAVCDGNVQMAELLLEHGADIDK), and 728-757 (NGWTPRALAEQQGHDDIQLLFRSRKAATAS). The segment at 826 to 854 (SQAQRETDHPLSRGGLAATGSPNPSSGSR) is disordered. A compositionally biased stretch (polar residues) spans 845 to 854 (GSPNPSSGSR). One can recognise a KHA domain in the interval 859–935 (RVTISCPEKG…WDAEKMKGKS (77 aa)).

Belongs to the potassium channel family. Plant (TC 1.A.1.4) subfamily. As to quaternary structure, the potassium channel is probably a homo- or heterotetrameric complex of pore-forming subunits. As to expression, highly expressed in the epidermis and endodermis of roots, and at lower level in cells of the vasculature and the cortex. Expressed in xylem parenchyma, phloem and mesophyll cells of leaves.

It is found in the membrane. Highly selective inward-rectifying potassium channel that mediates potassium uptake by plant roots. In Oryza sativa subsp. indica (Rice), this protein is Potassium channel AKT1 (AKT1).